Here is an 82-residue protein sequence, read N- to C-terminus: Small ribosomal subunit protein eS27 (82 aa).

Residues C37, C40, C56, and C59 each coordinate Zn(2+).

It belongs to the eukaryotic ribosomal protein eS27 family. In terms of assembly, component of the small ribosomal subunit. Mature ribosomes consist of a small (40S) and a large (60S) subunit. The 40S subunit contains about 32 different proteins and 1 molecule of RNA (18S). The 60S subunit contains 45 different proteins and 3 molecules of RNA (25S, 5.8S and 5S). Requires Zn(2+) as cofactor.

It localises to the cytoplasm. Component of the ribosome, a large ribonucleoprotein complex responsible for the synthesis of proteins in the cell. The small ribosomal subunit (SSU) binds messenger RNAs (mRNAs) and translates the encoded message by selecting cognate aminoacyl-transfer RNA (tRNA) molecules. The large subunit (LSU) contains the ribosomal catalytic site termed the peptidyl transferase center (PTC), which catalyzes the formation of peptide bonds, thereby polymerizing the amino acids delivered by tRNAs into a polypeptide chain. The nascent polypeptides leave the ribosome through a tunnel in the LSU and interact with protein factors that function in enzymatic processing, targeting, and the membrane insertion of nascent chains at the exit of the ribosomal tunnel. This is Small ribosomal subunit protein eS27 (RPS27) from Candida albicans (strain SC5314 / ATCC MYA-2876) (Yeast).